The sequence spans 133 residues: Nucleoside diphosphate kinase (133 aa).

ATP is bound by residues K9, F57, R85, T91, R102, and N112. H115 serves as the catalytic Pros-phosphohistidine intermediate.

It belongs to the NDK family. Requires Mg(2+) as cofactor.

The protein resides in the cytoplasm. It catalyses the reaction a 2'-deoxyribonucleoside 5'-diphosphate + ATP = a 2'-deoxyribonucleoside 5'-triphosphate + ADP. The enzyme catalyses a ribonucleoside 5'-diphosphate + ATP = a ribonucleoside 5'-triphosphate + ADP. Major role in the synthesis of nucleoside triphosphates other than ATP. The ATP gamma phosphate is transferred to the NDP beta phosphate via a ping-pong mechanism, using a phosphorylated active-site intermediate. This Methanococcus maripaludis (strain DSM 14266 / JCM 13030 / NBRC 101832 / S2 / LL) protein is Nucleoside diphosphate kinase.